A 295-amino-acid chain; its full sequence is MAWISLRIDARDDNAELLSDTLMELGALSASIEDANAETPDEQPIFGEPGDPPPGIWQQNVVTALLDESADLDSLLEELSAATGITDFRYSTETIAEQDWVRATQSQFEPIRIRDDLWIVPSWHDAPNPDGLNIVLDPGLAFGTGSHPTTHLCLSWLADTVKPDTSVLDYGCGSGILAIAARKLGAGKVVGVDIDAQAIQSSVYNADQNQVDASFYLASDLPGGQFDIVVANILSSALSVLAPALARAARSGGRIALSGILREQADQVSAIYQEWFEMDAPVFMDSWVLLTGSRR.

Positions 150, 171, 193, and 232 each coordinate S-adenosyl-L-methionine.

Belongs to the methyltransferase superfamily. PrmA family.

The protein localises to the cytoplasm. It carries out the reaction L-lysyl-[protein] + 3 S-adenosyl-L-methionine = N(6),N(6),N(6)-trimethyl-L-lysyl-[protein] + 3 S-adenosyl-L-homocysteine + 3 H(+). In terms of biological role, methylates ribosomal protein L11. This chain is Ribosomal protein L11 methyltransferase, found in Methylobacillus flagellatus (strain ATCC 51484 / DSM 6875 / VKM B-1610 / KT).